A 1025-amino-acid polypeptide reads, in one-letter code: Probable outer membrane protein PmpF (1025 aa).

A signal peptide spans 1–20; sequence MTRRILPLSLVFIPLSCISA. The segment at 654-681 is disordered; sequence NSTETQTANNSIQEQKNTSETFDSNSTT. Positions 659-681 are enriched in polar residues; sequence QTANNSIQEQKNTSETFDSNSTT. The 278-residue stretch at 748-1025 folds into the Autotransporter domain; sequence LLPDDSWFAL…YMNAGGALVF (278 aa).

Belongs to the PMP outer membrane protein family.

Its subcellular location is the secreted. It localises to the cell wall. The protein resides in the cell outer membrane. The protein is Probable outer membrane protein PmpF (pmpF) of Chlamydia muridarum (strain MoPn / Nigg).